Consider the following 348-residue polypeptide: Alternative squalene epoxidase (348 aa).

A compositionally biased stretch (basic and acidic residues) spans 1 to 10 (MLVDRVENNE). The interval 1 to 26 (MLVDRVENNEKQQQQMASSSDAMSDS) is disordered. Low complexity predominate over residues 12–26 (QQQQMASSSDAMSDS). The next 3 helical transmembrane spans lie at 55-75 (AIAW…LLLS), 105-125 (LGLV…WIFF), and 153-173 (GLLT…YLAI). The region spanning 197–332 (FMCLVLQDGI…FMWFDQLGGT (136 aa)) is the Fatty acid hydroxylase domain. The Histidine box-1 signature appears at 211–215 (HVLEH). The Histidine box-2 motif lies at 226–230 (HKPHH). 2 consecutive transmembrane segments (helical) span residues 243–263 (GSLM…ANLV) and 277–297 (SYAC…DGIF). The short motif at 308 to 312 (HHVHH) is the Histidine box-3 element.

This sequence belongs to the sterol desaturase family. As to quaternary structure, interacts with cytochrome b5/PHATRDRAFT_30770. Fe cation is required as a cofactor.

It is found in the endoplasmic reticulum membrane. The enzyme catalyses squalene + 2 Fe(II)-[cytochrome b5] + O2 + 2 H(+) = (S)-2,3-epoxysqualene + 2 Fe(III)-[cytochrome b5] + H2O. It functions in the pathway terpene metabolism; lanosterol biosynthesis; lanosterol from farnesyl diphosphate. With respect to regulation, the activity of this enzyme is not inhibited by terbinafine, an established inhibitor of the conventional flavoprotein squalene epoxidase. Functionally, catalyzes the stereospecific epoxidation of squalene at the terminal double bond to form (S)-2,3-epoxysqualene, the first oxygenation step in sterol biosynthesis. The sequence is that of Alternative squalene epoxidase from Phaeodactylum tricornutum (strain CCAP 1055/1).